A 252-amino-acid chain; its full sequence is Vitamin B12 import ATP-binding protein BtuD (252 aa).

The region spanning 2-237 (IQIKSLSVGA…EQLESVFNTQ (236 aa)) is the ABC transporter domain. 30-37 (GPNGSGKS) contributes to the ATP binding site.

This sequence belongs to the ABC transporter superfamily. Vitamin B12 importer (TC 3.A.1.13.1) family. The complex is composed of two ATP-binding proteins (BtuD), two transmembrane proteins (BtuC) and a solute-binding protein (BtuF).

The protein resides in the cell inner membrane. The catalysed reaction is an R-cob(III)alamin(out) + ATP + H2O = an R-cob(III)alamin(in) + ADP + phosphate + H(+). Part of the ABC transporter complex BtuCDF involved in vitamin B12 import. Responsible for energy coupling to the transport system. The sequence is that of Vitamin B12 import ATP-binding protein BtuD from Vibrio atlanticus (strain LGP32) (Vibrio splendidus (strain Mel32)).